Reading from the N-terminus, the 374-residue chain is Ribosomal RNA large subunit methyltransferase G (374 aa).

Belongs to the methyltransferase superfamily. RlmG family.

The protein resides in the cytoplasm. The catalysed reaction is guanosine(1835) in 23S rRNA + S-adenosyl-L-methionine = N(2)-methylguanosine(1835) in 23S rRNA + S-adenosyl-L-homocysteine + H(+). In terms of biological role, specifically methylates the guanine in position 1835 (m2G1835) of 23S rRNA. The polypeptide is Ribosomal RNA large subunit methyltransferase G (Pseudomonas putida (strain W619)).